The following is a 525-amino-acid chain: Neutrophil cytosol factor 2 (525 aa).

TPR repeat units lie at residues 37-70 (SRIC…DKHS), 71-104 (AVAY…LRGN), and 121-154 (CEVL…KSEP). Residue threonine 233 is modified to Phosphothreonine. Residues 240–299 (LEGEAHRVLFGFVPETPEELQVMPGNIVFVLKKGSDNWATVMFNGQKGLVPCNYLEPVEL) form the SH3 1 domain. The tract at residues 304-343 (QSQPQEDTSPESDIPPPPNSSPPGRLQLSPGHKQKEPKEL) is disordered. Phosphoserine is present on residues serine 324 and serine 398. Residues 350-428 (PYMLKVHYKY…YCLTLWCEHT (79 aa)) enclose the PB1 domain. The tract at residues 437–457 (EPIQRENSDASKQTTEPQPKE) is disordered. One can recognise an SH3 2 domain in the interval 456–515 (KEGTQVVAIFSYEAAQPEDLEFVEGDVILVLSHVNEEWLEGECKGKVGIFPKAFVEGCAA).

The protein belongs to the NCF2/NOXA1 family. As to quaternary structure, component of the phagocyte NADPH oxidase complex composed of an obligatory core heterodimer formed by the membrane proteins CYBA and CYBB and the cytosolic regulatory subunits NCF1/p47-phox, NCF2/p67-phox, NCF4/p40-phox and the small GTPase RAC1 or RAC2. Part of a cytosolic complex composed at least by NCF1, NCF2 and NCF4. Interacts with NCF4. Interacts (via the C-terminal SH3 domain) with NCF1 (via C-terminus). Interacts with SYTL1 and RAC1. May interact with NOXO1. Interacts with S100A8 and calprotectin (S100A8/9). Interacts with GBP7 (via GB1/RHD3-type G domain). Interacts with CYBB; the interaction is enhanced in the presence of GBP7.

Its subcellular location is the cytoplasm. In terms of biological role, NCF2, NCF1, and a membrane bound cytochrome b558 are required for activation of the latent NADPH oxidase (necessary for superoxide production). Functionally, subunit of the phagocyte NADPH oxidase complex that mediates the transfer of electrons from cytosolic NADPH to O2 to produce the superoxide anion (O2(-)). In the activated complex, electrons are first transferred from NADPH to flavin adenine dinucleotide (FAD) and subsequently transferred via two heme molecules to molecular oxygen, producing superoxide through an outer-sphere reaction. Activation of the NADPH oxidase complex is initiated by the assembly of cytosolic subunits of the NADPH oxidase complex with the core NADPH oxidase complex to form a complex at the plasma membrane or phagosomal membrane. This activation process is initiated by phosphorylation dependent binding of the cytosolic NCF1/p47-phox subunit to the C-terminus of CYBA/p22-phox. In Mus musculus (Mouse), this protein is Neutrophil cytosol factor 2.